The chain runs to 383 residues: 8-amino-7-oxononanoate synthase (383 aa).

Residue arginine 23 participates in substrate binding. Residue 110-111 participates in pyridoxal 5'-phosphate binding; sequence GF. Histidine 135 is a binding site for substrate. The pyridoxal 5'-phosphate site is built by serine 181, histidine 209, and threonine 235. Position 238 is an N6-(pyridoxal phosphate)lysine (lysine 238). A substrate-binding site is contributed by threonine 351.

This sequence belongs to the class-II pyridoxal-phosphate-dependent aminotransferase family. BioF subfamily. In terms of assembly, homodimer. Pyridoxal 5'-phosphate is required as a cofactor.

The catalysed reaction is 6-carboxyhexanoyl-[ACP] + L-alanine + H(+) = (8S)-8-amino-7-oxononanoate + holo-[ACP] + CO2. The protein operates within cofactor biosynthesis; biotin biosynthesis. In terms of biological role, catalyzes the decarboxylative condensation of pimeloyl-[acyl-carrier protein] and L-alanine to produce 8-amino-7-oxononanoate (AON), [acyl-carrier protein], and carbon dioxide. In Aliivibrio fischeri (strain MJ11) (Vibrio fischeri), this protein is 8-amino-7-oxononanoate synthase.